The chain runs to 496 residues: Lysine--tRNA ligase (496 aa).

The Mg(2+) site is built by E409 and E416.

This sequence belongs to the class-II aminoacyl-tRNA synthetase family. Homodimer. Requires Mg(2+) as cofactor.

The protein localises to the cytoplasm. It catalyses the reaction tRNA(Lys) + L-lysine + ATP = L-lysyl-tRNA(Lys) + AMP + diphosphate. This Streptococcus pneumoniae serotype 19F (strain G54) protein is Lysine--tRNA ligase.